Here is a 272-residue protein sequence, read N- to C-terminus: Type II secretion system protein C (272 aa).

The Cytoplasmic portion of the chain corresponds to 1–16; sequence MNISKLPPLSPSVIRR. Residues 17-35 form a helical membrane-spanning segment; that stretch reads ILFYLLMLLFCQQLAMIFW. Topologically, residues 36–272 are periplasmic; sequence RVGLPDNSPV…DIYMEFGGDE (237 aa).

It belongs to the GSP C family.

The protein localises to the cell inner membrane. Its function is as follows. Involved in a type II secretion system (T2SS, formerly general secretion pathway, GSP) for the export of proteins. Required for the translocation of the multiple pectic enzymes. This Dickeya chrysanthemi (Pectobacterium chrysanthemi) protein is Type II secretion system protein C (outC).